Consider the following 300-residue polypeptide: tRNA pseudouridine synthase B (300 aa).

The Nucleophile role is filled by Asp44.

This sequence belongs to the pseudouridine synthase TruB family. Type 1 subfamily.

The catalysed reaction is uridine(55) in tRNA = pseudouridine(55) in tRNA. Its function is as follows. Responsible for synthesis of pseudouridine from uracil-55 in the psi GC loop of transfer RNAs. The sequence is that of tRNA pseudouridine synthase B from Corynebacterium diphtheriae (strain ATCC 700971 / NCTC 13129 / Biotype gravis).